Reading from the N-terminus, the 280-residue chain is Formamidopyrimidine-DNA glycosylase (280 aa).

Pro-2 (schiff-base intermediate with DNA) is an active-site residue. Glu-3 (proton donor) is an active-site residue. Lys-58 serves as the catalytic Proton donor; for beta-elimination activity. Residues His-91, Arg-110, and Arg-152 each contribute to the DNA site. The FPG-type zinc finger occupies 237 to 271 (NVYGRENLPCPQCDSAIEKVVLNQRAAYFCSNCQK). Arg-261 acts as the Proton donor; for delta-elimination activity in catalysis.

Belongs to the FPG family. In terms of assembly, monomer. It depends on Zn(2+) as a cofactor.

The catalysed reaction is Hydrolysis of DNA containing ring-opened 7-methylguanine residues, releasing 2,6-diamino-4-hydroxy-5-(N-methyl)formamidopyrimidine.. It catalyses the reaction 2'-deoxyribonucleotide-(2'-deoxyribose 5'-phosphate)-2'-deoxyribonucleotide-DNA = a 3'-end 2'-deoxyribonucleotide-(2,3-dehydro-2,3-deoxyribose 5'-phosphate)-DNA + a 5'-end 5'-phospho-2'-deoxyribonucleoside-DNA + H(+). Functionally, involved in base excision repair of DNA damaged by oxidation or by mutagenic agents. Acts as a DNA glycosylase that recognizes and removes damaged bases. Has a preference for oxidized purines, such as 7,8-dihydro-8-oxoguanine (8-oxoG). Has AP (apurinic/apyrimidinic) lyase activity and introduces nicks in the DNA strand. Cleaves the DNA backbone by beta-delta elimination to generate a single-strand break at the site of the removed base with both 3'- and 5'-phosphates. This Hydrogenovibrio crunogenus (strain DSM 25203 / XCL-2) (Thiomicrospira crunogena) protein is Formamidopyrimidine-DNA glycosylase.